Consider the following 555-residue polypeptide: O-fucosyltransferase 20 (555 aa).

Over 1–58 the chain is Cytoplasmic; it reads MALPKNGGNSSSTKKKVSYISVPSQIINSLSSSSLQSLLVSPKKSSRCTNRFSYRNPR. Residues 59-79 form a helical; Signal-anchor for type II membrane protein membrane-spanning segment; the sequence is IWFLTLFLVSLFGMLKLGLNV. At 80 to 555 the chain is on the lumenal side; the sequence is DPISLPFSRY…MCSDRRQQQQ (476 aa). The segment at 110 to 130 is disordered; sequence KNDTQSSSSSEHRKNETLPTE. 2 N-linked (GlcNAc...) asparagine glycosylation sites follow: asparagine 111 and asparagine 124. 330-332 contacts substrate; sequence HLR. Asparagine 371 and asparagine 503 each carry an N-linked (GlcNAc...) asparagine glycan. Residues 525-555 are disordered; it reads QPELRTGRGGKDVTKHPVSECMCSDRRQQQQ. Residues 529–555 are compositionally biased toward basic and acidic residues; it reads RTGRGGKDVTKHPVSECMCSDRRQQQQ.

Belongs to the glycosyltransferase GT106 family. As to expression, highly expressed in embryogenic microspore and in vegetative tissues.

Its subcellular location is the golgi apparatus membrane. The protein operates within glycan metabolism. In terms of biological role, may play a role in the biosynthesis of matrix polysaccharides and contribute to the biomechanics and development of the plant cell wall. This is O-fucosyltransferase 20 from Brassica napus (Rape).